We begin with the raw amino-acid sequence, 540 residues long: CTP synthase (540 aa).

The segment at Met1–Leu267 is amidoligase domain. Ser15 provides a ligand contact to CTP. Ser15 is a UTP binding site. ATP is bound at residue Ser16–Ile21. Tyr56 contributes to the L-glutamine binding site. Asp73 is an ATP binding site. The Mg(2+) site is built by Asp73 and Glu141. CTP-binding positions include Asp148–Glu150, Lys188–Gln193, and Lys224. Residues Lys188 to Gln193 and Lys224 contribute to the UTP site. Arg240–Ala242 contacts ATP. The 249-residue stretch at Thr292 to Lys540 folds into the Glutamine amidotransferase type-1 domain. Gly360 contacts L-glutamine. Residue Cys387 is the Nucleophile; for glutamine hydrolysis of the active site. Residues Met388–Gln391, Glu411, and Arg468 each bind L-glutamine. Catalysis depends on residues His513 and Glu515.

It belongs to the CTP synthase family. Homotetramer.

The enzyme catalyses UTP + L-glutamine + ATP + H2O = CTP + L-glutamate + ADP + phosphate + 2 H(+). It carries out the reaction L-glutamine + H2O = L-glutamate + NH4(+). It catalyses the reaction UTP + NH4(+) + ATP = CTP + ADP + phosphate + 2 H(+). It participates in pyrimidine metabolism; CTP biosynthesis via de novo pathway; CTP from UDP: step 2/2. Its activity is regulated as follows. Allosterically activated by GTP, when glutamine is the substrate; GTP has no effect on the reaction when ammonia is the substrate. The allosteric effector GTP functions by stabilizing the protein conformation that binds the tetrahedral intermediate(s) formed during glutamine hydrolysis. Inhibited by the product CTP, via allosteric rather than competitive inhibition. Catalyzes the ATP-dependent amination of UTP to CTP with either L-glutamine or ammonia as the source of nitrogen. Regulates intracellular CTP levels through interactions with the four ribonucleotide triphosphates. This Methanocaldococcus jannaschii (strain ATCC 43067 / DSM 2661 / JAL-1 / JCM 10045 / NBRC 100440) (Methanococcus jannaschii) protein is CTP synthase.